A 129-amino-acid chain; its full sequence is Large ribosomal subunit protein bL17 (129 aa).

The protein belongs to the bacterial ribosomal protein bL17 family. In terms of assembly, part of the 50S ribosomal subunit. Contacts protein L32.

The protein is Large ribosomal subunit protein bL17 of Desulfotalea psychrophila (strain LSv54 / DSM 12343).